The sequence spans 347 residues: MCSLITQLCDAGQLADYVGLGWLNAVSSQPYLVQALGLQPPPRRVDVDAAFRDAEGLHGHQPWVATPLPGRTVRALFIGINYYGTSAALSGCCNDVKQMLATLQKKGLPINEAVILVDEDNFPGRTDQPTRDNIVRYMAWLVKDAKPGDVLFFHYSGHGTQCKSRGDSDEKYDQCIAPVDFQKSGCIVDDDIHKLLFSRLPEKVRLTAVFDCCHSGSIMDLPFTYVCSGGEQASGTPHMKRIREGNDVLGDVMMISGCADEQTSADVKNTATFGTGSTGAGGAATQCITCMLMNNQSLSYGKLLIETRDMLKRKGFKQVPQLSASKAIDLDQTFSLTEMFSVDRSVQ.

Residues 1-70 (MCSLITQLCD…QPWVATPLPG (70 aa)) form a regulates substrate access to the active site region. His158 is an active-site residue. Residues Asp173, Asp189, and Asp190 each coordinate Ca(2+). Residue Cys213 is part of the active site. Asp220 contacts Ca(2+).

The protein belongs to the peptidase C14B family. As to quaternary structure, monomer. In terms of processing, auto-proteolytic cleavage of the propeptide after Lys-55 and between the large and small subunits after Lys-268 is required for catalytic activity towards large protein substrates but is dispensable towards small oligopeptide substrates. After processing, the propeptide and the large and small subunits remain associated by non-covalent bonds. In vivo, the unprocessed enzyme appears to be the predominant form.

The protein resides in the recycling endosome. Its activity is regulated as follows. Activated by Ca(2+). In response to calcium binding, the 280-loop, the 280-loop, a disordered loop consisting of residues 269-275, undergoes a conformational change which stabilizes substrates in the active site. The binding to the substrate triggers the release of the N-terminal region resulting in the activation of the enzyme. Proteolytic cleavage is required for catalytic activity towards large protein substrates. Functionally, cysteine protease that cleaves specifically after arginine or lysine residues. The protein is Metacaspase-2 of Trypanosoma brucei brucei.